Consider the following 137-residue polypeptide: Peptide methionine sulfoxide reductase MsrB (137 aa).

The region spanning 7-129 (PGELKNGLSE…NSASLSFTDE (123 aa)) is the MsrB domain. Zn(2+) contacts are provided by Cys-46, Cys-49, Cys-95, and Cys-98. The Nucleophile role is filled by Cys-118.

This sequence belongs to the MsrB Met sulfoxide reductase family. The cofactor is Zn(2+).

The catalysed reaction is L-methionyl-[protein] + [thioredoxin]-disulfide + H2O = L-methionyl-(R)-S-oxide-[protein] + [thioredoxin]-dithiol. The chain is Peptide methionine sulfoxide reductase MsrB from Klebsiella pneumoniae (strain 342).